Consider the following 297-residue polypeptide: Protease HtpX homolog (297 aa).

2 helical membrane-spanning segments follow: residues 14–34 and 39–59; these read VILL…AGYL and YQLG…SMIF. H143 is a binding site for Zn(2+). E144 is an active-site residue. Position 147 (H147) interacts with Zn(2+). 2 helical membrane passes run 158-178 and 193-213; these read IAVA…RMMW and GFGA…PLAA. E225 lines the Zn(2+) pocket.

The protein belongs to the peptidase M48B family. Requires Zn(2+) as cofactor.

The protein resides in the cell membrane. The polypeptide is Protease HtpX homolog (Streptococcus equi subsp. equi (strain 4047)).